We begin with the raw amino-acid sequence, 275 residues long: Pantothenate synthetase (275 aa).

26-33 is a binding site for ATP; it reads MGNLHDGH. Histidine 33 acts as the Proton donor in catalysis. Residue glutamine 57 participates in (R)-pantoate binding. Position 57 (glutamine 57) interacts with beta-alanine. Position 144-147 (144-147) interacts with ATP; sequence GKKD. Glutamine 150 is a binding site for (R)-pantoate. Residues valine 173 and 181–184 each bind ATP; that span reads LSSR.

It belongs to the pantothenate synthetase family. In terms of assembly, homodimer.

Its subcellular location is the cytoplasm. The enzyme catalyses (R)-pantoate + beta-alanine + ATP = (R)-pantothenate + AMP + diphosphate + H(+). Its pathway is cofactor biosynthesis; (R)-pantothenate biosynthesis; (R)-pantothenate from (R)-pantoate and beta-alanine: step 1/1. Catalyzes the condensation of pantoate with beta-alanine in an ATP-dependent reaction via a pantoyl-adenylate intermediate. This Azoarcus sp. (strain BH72) protein is Pantothenate synthetase.